The sequence spans 269 residues: MKITSISVQQKNKERYNIFIDEKYNFSVDEEVLARYQLMKGKVLTEAKIEEIKQADMVRKGLNKAINFLSHRVRSEKEIRDYLRKQEMEAFAIDEILKKLADMDYINDLEFAELYTKTQIKTTLKGPRTIERELVEKGLTREIITQVIEEYSDEAQLENATKQAIKIMKRNNKSAKKMLQQKIITDLIQKGYTSELAKVAATEATSELDVADEAEILQKQIEKTMRKNKRYKPSIAKQKTITSLMQKGFSYDTIQSYLTENEISFEEEE.

It belongs to the RecX family.

The protein localises to the cytoplasm. Functionally, modulates RecA activity. This chain is Regulatory protein RecX, found in Listeria monocytogenes serotype 4b (strain CLIP80459).